The primary structure comprises 322 residues: Ferrochelatase (322 aa).

The Fe cation site is built by histidine 194 and glutamate 275.

It belongs to the ferrochelatase family.

It is found in the cytoplasm. The catalysed reaction is heme b + 2 H(+) = protoporphyrin IX + Fe(2+). The protein operates within porphyrin-containing compound metabolism; protoheme biosynthesis; protoheme from protoporphyrin-IX: step 1/1. In terms of biological role, catalyzes the ferrous insertion into protoporphyrin IX. The chain is Ferrochelatase from Proteus mirabilis (strain HI4320).